The chain runs to 315 residues: Protein MFI (315 aa).

In terms of assembly, can homodimerize. Interacts with MFF; the interaction inhibits MFF interaction with DNM1L. As to expression, enriched in the pancreatic beta cell and the testis and is expressed at low levels in other tissues tested.

Its subcellular location is the cytoplasm. It is found in the cytosol. The protein resides in the mitochondrion outer membrane. Acts as an inhibitor of mitochondrial fission. Interacts with MFF and prevents DNM1L recruitment to mitochondria, promoting a more fused mitochondrial network. This is Protein MFI from Mus musculus (Mouse).